The chain runs to 290 residues: Small ribosomal subunit biogenesis GTPase RsgA (290 aa).

One can recognise a CP-type G domain in the interval 61 to 218 (KSELVRPTVA…IVDTPGFSTL (158 aa)). GTP-binding positions include 110 to 113 (NKID) and 161 to 169 (GPSGAGKST). Residues C243, C248, H250, and C256 each coordinate Zn(2+).

This sequence belongs to the TRAFAC class YlqF/YawG GTPase family. RsgA subfamily. In terms of assembly, monomer. Associates with 30S ribosomal subunit, binds 16S rRNA. Requires Zn(2+) as cofactor.

The protein resides in the cytoplasm. Functionally, one of several proteins that assist in the late maturation steps of the functional core of the 30S ribosomal subunit. Helps release RbfA from mature subunits. May play a role in the assembly of ribosomal proteins into the subunit. Circularly permuted GTPase that catalyzes slow GTP hydrolysis, GTPase activity is stimulated by the 30S ribosomal subunit. The sequence is that of Small ribosomal subunit biogenesis GTPase RsgA from Clostridium beijerinckii (strain ATCC 51743 / NCIMB 8052) (Clostridium acetobutylicum).